The primary structure comprises 272 residues: Undecaprenyl-diphosphatase (272 aa).

Transmembrane regions (helical) follow at residues 2 to 22 (FDIIKAVIIGIVEGLTEFLPI), 43 to 63 (FISMFEYVIQFGAILAVVLLY), 82 to 102 (WQLWAKVIIAVLPSAVVGLPL), 110 to 130 (LHTPIVVATTLIVYGILFIIL), 185 to 205 (YVATEFSFFLAIPTMVGVLII), 224 to 244 (VLMTGSIVSFLVAIVAIKWLL), and 252 to 272 (FKPFGWYRIALGAIVLLVMFI).

The protein belongs to the UppP family.

It is found in the cell membrane. The catalysed reaction is di-trans,octa-cis-undecaprenyl diphosphate + H2O = di-trans,octa-cis-undecaprenyl phosphate + phosphate + H(+). Catalyzes the dephosphorylation of undecaprenyl diphosphate (UPP). Confers resistance to bacitracin. This chain is Undecaprenyl-diphosphatase, found in Lacticaseibacillus casei (strain BL23) (Lactobacillus casei).